The chain runs to 331 residues: Glyoxylate reductase (331 aa).

NADP(+) is bound by residues 158-161 (FGRI), 180-182 (SRT), and 239-241 (TSR). Catalysis depends on residues Arg-241 and Glu-270. Catalysis depends on His-288, which acts as the Proton donor. Position 288–290 (288–290 (HIG)) interacts with NADP(+).

The protein belongs to the D-isomer specific 2-hydroxyacid dehydrogenase family. GyaR subfamily. As to quaternary structure, homodimer.

It is found in the cytoplasm. The enzyme catalyses glycolate + NAD(+) = glyoxylate + NADH + H(+). In Thermococcus litoralis (strain ATCC 51850 / DSM 5473 / JCM 8560 / NS-C), this protein is Glyoxylate reductase.